Reading from the N-terminus, the 88-residue chain is Elongation factor 1-beta (88 aa).

The protein belongs to the EF-1-beta/EF-1-delta family.

In terms of biological role, promotes the exchange of GDP for GTP in EF-1-alpha/GDP, thus allowing the regeneration of EF-1-alpha/GTP that could then be used to form the ternary complex EF-1-alpha/GTP/AAtRNA. This chain is Elongation factor 1-beta, found in Halobacterium salinarum (strain ATCC 29341 / DSM 671 / R1).